Consider the following 500-residue polypeptide: uncharacterized protein (500 aa).

An N-terminal signal peptide occupies residues M1–G20. N-linked (GlcNAc...) asparagine glycosylation occurs at N43. An FAD-binding PCMH-type domain is found at T60–Q232. At H98 the chain carries Pros-8alpha-FAD histidine. N-linked (GlcNAc...) asparagine glycans are attached at residues N194, N201, N246, N299, and N414.

It belongs to the oxygen-dependent FAD-linked oxidoreductase family. FAD is required as a cofactor.

Its subcellular location is the secreted. This is an uncharacterized protein from Arthroderma benhamiae (strain ATCC MYA-4681 / CBS 112371) (Trichophyton mentagrophytes).